The chain runs to 258 residues: Acyl-[acyl-carrier-protein]--UDP-N-acetylglucosamine O-acyltransferase (258 aa).

Belongs to the transferase hexapeptide repeat family. LpxA subfamily. Homotrimer.

Its subcellular location is the cytoplasm. The catalysed reaction is a (3R)-hydroxyacyl-[ACP] + UDP-N-acetyl-alpha-D-glucosamine = a UDP-3-O-[(3R)-3-hydroxyacyl]-N-acetyl-alpha-D-glucosamine + holo-[ACP]. Its pathway is glycolipid biosynthesis; lipid IV(A) biosynthesis; lipid IV(A) from (3R)-3-hydroxytetradecanoyl-[acyl-carrier-protein] and UDP-N-acetyl-alpha-D-glucosamine: step 1/6. Its function is as follows. Involved in the biosynthesis of lipid A, a phosphorylated glycolipid that anchors the lipopolysaccharide to the outer membrane of the cell. The chain is Acyl-[acyl-carrier-protein]--UDP-N-acetylglucosamine O-acyltransferase from Pseudomonas savastanoi pv. phaseolicola (strain 1448A / Race 6) (Pseudomonas syringae pv. phaseolicola (strain 1448A / Race 6)).